Reading from the N-terminus, the 886-residue chain is Protein translocase subunit SecA (886 aa).

Residues glutamine 85, 103–107 (GEGKT), and aspartate 492 contribute to the ATP site. Positions 841 to 864 (RVVENRYAEEGPKQPARRENKVGR) are enriched in basic and acidic residues. The disordered stretch occupies residues 841–866 (RVVENRYAEEGPKQPARRENKVGRND). The Zn(2+) site is built by cysteine 868, cysteine 870, cysteine 879, and cysteine 880.

It belongs to the SecA family. Monomer and homodimer. Part of the essential Sec protein translocation apparatus which comprises SecA, SecYEG and auxiliary proteins SecDF. Other proteins may also be involved. Zn(2+) is required as a cofactor.

The protein localises to the cell membrane. The protein resides in the cytoplasm. It carries out the reaction ATP + H2O + cellular proteinSide 1 = ADP + phosphate + cellular proteinSide 2.. Functionally, part of the Sec protein translocase complex. Interacts with the SecYEG preprotein conducting channel. Has a central role in coupling the hydrolysis of ATP to the transfer of proteins into and across the cell membrane, serving as an ATP-driven molecular motor driving the stepwise translocation of polypeptide chains across the membrane. The sequence is that of Protein translocase subunit SecA from Pelotomaculum thermopropionicum (strain DSM 13744 / JCM 10971 / SI).